Reading from the N-terminus, the 261-residue chain is Oligodendrocyte transcription factor 1 (261 aa).

Positions 41 to 105 (PPISSSSSTS…LRRKINSRER (65 aa)) are disordered. Residues 44–56 (SSSSSTSSSSTAS) show a composition bias toward low complexity. The region spanning 95–154 (QLRRKINSRERKRMQDLNLAMDALREVILPYSAAHCQGAPGRKLSKIATLLLARNYILLL) is the bHLH domain.

Expressed specifically in the brain, including the corpus callosum, hippocampal and cerebral white matter. Also detected in cells scattered in gray matter, most probably in oligodendrocytes.

It is found in the nucleus. Its function is as follows. Promotes formation and maturation of oligodendrocytes, especially within the brain. Cooperates with OLIG2 to establish the pMN domain of the embryonic neural tube. The sequence is that of Oligodendrocyte transcription factor 1 (Olig1) from Rattus norvegicus (Rat).